The chain runs to 334 residues: Spermatogenesis-associated protein 32 (334 aa).

The segment at 24–98 (SDHHRHHHHH…TESPEQQNYR (75 aa)) is disordered. Positions 37–47 (ENEDEDTEVEA) are enriched in acidic residues. The segment covering 48-60 (ELPRTEPPPKVDP) has biased composition (basic and acidic residues). Residues 77–98 (SKTTPETEGDSYTESPEQQNYR) are compositionally biased toward polar residues. S135 and S138 each carry phosphoserine.

Interacts with syntaxin-1 and ACTB. As to expression, highly expressed in the testis and weakly in the brain and heart.

This chain is Spermatogenesis-associated protein 32 (Spata32), found in Mus musculus (Mouse).